The following is a 50-amino-acid chain: Sperm protamine P1 (50 aa).

2 cysteine pairs are disulfide-bonded: cysteine 7/cysteine 15 and cysteine 38/cysteine 46.

This sequence belongs to the protamine P1 family. Cross-linked by interchain disulfide bonds around the DNA-helix. In terms of tissue distribution, testis.

It localises to the nucleus. The protein resides in the chromosome. Protamines substitute for histones in the chromatin of sperm during the haploid phase of spermatogenesis. They compact sperm DNA into a highly condensed, stable and inactive complex. This chain is Sperm protamine P1 (PRM1), found in Equus asinus (Donkey).